Consider the following 358-residue polypeptide: Alanine racemase (358 aa).

K35 serves as the catalytic Proton acceptor; specific for D-alanine. At K35 the chain carries N6-(pyridoxal phosphate)lysine. R130 lines the substrate pocket. Y255 (proton acceptor; specific for L-alanine) is an active-site residue. Position 303 (M303) interacts with substrate.

Belongs to the alanine racemase family. Pyridoxal 5'-phosphate serves as cofactor.

The enzyme catalyses L-alanine = D-alanine. It participates in amino-acid biosynthesis; D-alanine biosynthesis; D-alanine from L-alanine: step 1/1. In terms of biological role, catalyzes the interconversion of L-alanine and D-alanine. May also act on other amino acids. The polypeptide is Alanine racemase (alr) (Shewanella sp. (strain MR-4)).